Here is a 562-residue protein sequence, read N- to C-terminus: Protein wntless (562 aa).

At 1–13 (MSGTILENLSGRK) the chain is on the cytoplasmic side. A helical transmembrane segment spans residues 14 to 34 (LSILVSSLLLCQVACFLIGGL). The Lumenal portion of the chain corresponds to 35–239 (YAPVPAGHQI…AIHQNGGFTQ (205 aa)). 2 N-linked (GlcNAc...) asparagine glycosylation sites follow: Asn58 and Asn103. A helical transmembrane segment spans residues 240 to 260 (VWLLLKSVLFPFIIGIMVWFW). Over 261-270 (RRVHILQRSP) the chain is Cytoplasmic. The chain crosses the membrane as a helical span at residues 271–291 (ALLEYMLLYLGGALSFLNLPL). At 292-311 (EYLTLSFEMPYMLLLSDVRQ) the chain is on the lumenal side. Residues 312–332 (GIFYAMLLSFWLVFAGEHMLI) traverse the membrane as a helical segment. The Cytoplasmic segment spans residues 333–344 (QDSPNKSTIRSR). A helical transmembrane segment spans residues 345-365 (YWKHLSAVVVGCISLFVFDIC). Topologically, residues 366 to 390 (ERGMQLRNPFYSIWTTPLGAKVAMS) are lumenal. Residues 391–411 (FIVLAGVSAGIYFLFLCYMVW) form a helical membrane-spanning segment. Residues 412 to 441 (KVFKDIGDKRTSLPSMSQARRLHYEGLIYR) lie on the Cytoplasmic side of the membrane. A helical membrane pass occupies residues 442–462 (FKFLMLATLLCAGLTVAGFIM). Residues 463 to 482 (GQMAEGHWKWNEDIEIQLTS) are Lumenal-facing. Residues 483–503 (AFLTGVYGMWNIYIFALLILY) traverse the membrane as a helical segment. The Cytoplasmic segment spans residues 504–562 (APSHKQWPTMRHSDETTQSNENIVASAASEEIEFSNLPSDSNPSEISSLTSFTRKVAFD). Positions 538 to 562 (SNLPSDSNPSEISSLTSFTRKVAFD) are disordered. The span at 539–556 (NLPSDSNPSEISSLTSFT) shows a compositional bias: polar residues.

Belongs to the wntless family. Interacts with wg; in the Golgi. Interacts with Vps35, a component of the retromer complex; wls stability is regulated by Vps35.

The protein localises to the presynaptic cell membrane. It localises to the postsynaptic cell membrane. The protein resides in the cell membrane. Its subcellular location is the endoplasmic reticulum membrane. It is found in the endosome membrane. The protein localises to the golgi apparatus membrane. A segment polarity gene required for wingless (wg)-dependent patterning processes, acting in both wg-sending cells and wg-target cells. In non-neuronal cells wls directs wg secretion. The wls traffic loop encompasses the Golgi, the cell surface, an endocytic compartment and a retrograde route leading back to the Golgi, and involves clathrin-mediated endocytosis and the retromer complex (a conserved protein complex consisting of Vps35 and Vps26). In neuronal cells (the larval motorneuron NMJ), the wg signal moves across the synapse via the release of wls-containing exosome-like vesicles. Postsynaptic wls is required for the trafficking of fz2 through the fz2-interacting protein Grip. In Drosophila mojavensis (Fruit fly), this protein is Protein wntless.